Here is a 381-residue protein sequence, read N- to C-terminus: Anhydro-N-acetylmuramic acid kinase (381 aa).

22 to 29 (GTSIDGID) is a binding site for ATP.

It belongs to the anhydro-N-acetylmuramic acid kinase family.

The enzyme catalyses 1,6-anhydro-N-acetyl-beta-muramate + ATP + H2O = N-acetyl-D-muramate 6-phosphate + ADP + H(+). It functions in the pathway amino-sugar metabolism; 1,6-anhydro-N-acetylmuramate degradation. The protein operates within cell wall biogenesis; peptidoglycan recycling. Its function is as follows. Catalyzes the specific phosphorylation of 1,6-anhydro-N-acetylmuramic acid (anhMurNAc) with the simultaneous cleavage of the 1,6-anhydro ring, generating MurNAc-6-P. Is required for the utilization of anhMurNAc either imported from the medium or derived from its own cell wall murein, and thus plays a role in cell wall recycling. This is Anhydro-N-acetylmuramic acid kinase from Xylella fastidiosa (strain Temecula1 / ATCC 700964).